A 107-amino-acid polypeptide reads, in one-letter code: Cytochrome c oxidase assembly protein COX16 homolog, mitochondrial (107 aa).

At 1-14 (MFGYAVRRALRKSK) the chain is on the mitochondrial matrix side. Residues 15–37 (TLRYGVPMLLLIVGGSFGLREFS) traverse the membrane as a helical segment. Topologically, residues 38-107 (QIRYDAVKIK…PEILKTNKTT (70 aa)) are mitochondrial intermembrane. The interval 80 to 107 (NIRGPRPWEDPDLLQGRNPEILKTNKTT) is disordered.

Belongs to the COX16 family. Associates with the MITRAC complex. Interacts with MT-CO2/COX; specifically interacts with newly synthesized MT-CO2/COX. Interacts with SCO1, SCO2 and COA6.

The protein resides in the mitochondrion inner membrane. In terms of biological role, required for the assembly of the mitochondrial respiratory chain complex IV (CIV), also known as cytochrome c oxidase. Promotes the insertion of copper into the active site of cytochrome c oxidase subunit II (MT-CO2/COX2). Interacts specifically with newly synthesized MT-CO2/COX and its copper center-forming metallochaperones SCO1, SCO2 and COA6. Probably facilitates MT-CO2/COX2 association with the MITRAC assembly intermediate containing MT-CO1/COX1, thereby participating in merging the MT-CO1/COX1 and MT-CO2/COX2 assembly lines. This is Cytochrome c oxidase assembly protein COX16 homolog, mitochondrial from Bos taurus (Bovine).